Consider the following 274-residue polypeptide: 2,3,4,5-tetrahydropyridine-2,6-dicarboxylate N-succinyltransferase (274 aa).

It belongs to the transferase hexapeptide repeat family.

The protein localises to the cytoplasm. It carries out the reaction (S)-2,3,4,5-tetrahydrodipicolinate + succinyl-CoA + H2O = (S)-2-succinylamino-6-oxoheptanedioate + CoA. Its pathway is amino-acid biosynthesis; L-lysine biosynthesis via DAP pathway; LL-2,6-diaminopimelate from (S)-tetrahydrodipicolinate (succinylase route): step 1/3. The polypeptide is 2,3,4,5-tetrahydropyridine-2,6-dicarboxylate N-succinyltransferase (Salmonella agona (strain SL483)).